A 293-amino-acid chain; its full sequence is Magnetosome protein MamB (293 aa).

At 1–12 the chain is on the cytoplasmic side; sequence MTTAACRKCRDE. The tract at residues 1 to 214 is transmembrane domain (TMD); the sequence is MTTAACRKCR…GLMDTSVEND (214 aa). The chain crosses the membrane as a helical span at residues 13-33; sequence VIWWAFFINIGQTTYKGVLGV. At 34–78 the chain is on the lumenal side; that stretch reads LSGSAALVADAMHSGADVVATLVTMFSVKVSDKKADEKYPFGYGN. A helical transmembrane segment spans residues 79 to 99; that stretch reads IQFIASSIVGLILFFGALYLM. The Cytoplasmic portion of the chain corresponds to 100–105; that stretch reads YESTMQ. Residues 106 to 126 traverse the membrane as a helical segment; the sequence is IIAGNTSSPSPFAVLGAIVSI. The Lumenal segment spans residues 127–158; it reads ATNELMFRYQSCVGRQNNSPAIIANAWDNRSD. A helical membrane pass occupies residues 159–179; it reads ALSSVAVLIGIVAAVVGFPIA. Residues 180 to 293 are Cytoplasmic-facing; that stretch reads DRLAAIGVGI…VGVTPVRIAA (114 aa). The segment at 215-293 is C-terminal domain (CTD); the sequence is VLVDAYNIAK…VGVTPVRIAA (79 aa). Positions 245, 247, and 283 each coordinate Zn(2+).

It belongs to the cation diffusion facilitator (CDF) transporter (TC 2.A.4) family. In terms of assembly, the isolated C-terminal domain (approximately 213-293) forms homodimers. Forms heterodimers with MamM.

Its subcellular location is the magnetosome membrane. Functionally, plays a dual, essential role in magnetosome formation; required for magnetosome vesicle formation as well as biomineralization. Probably binds and transports iron. Requires heterodimerization with MamM for stability. The chain is Magnetosome protein MamB (mamB) from Magnetospira sp. (strain QH-2) (Marine magnetic spirillum (strain QH-2)).